We begin with the raw amino-acid sequence, 546 residues long: Glucose-6-phosphate isomerase (546 aa).

E357 functions as the Proton donor in the catalytic mechanism. Catalysis depends on residues H389 and K509.

The protein belongs to the GPI family.

The protein localises to the cytoplasm. It carries out the reaction alpha-D-glucose 6-phosphate = beta-D-fructose 6-phosphate. It functions in the pathway carbohydrate biosynthesis; gluconeogenesis. It participates in carbohydrate degradation; glycolysis; D-glyceraldehyde 3-phosphate and glycerone phosphate from D-glucose: step 2/4. Functionally, catalyzes the reversible isomerization of glucose-6-phosphate to fructose-6-phosphate. The protein is Glucose-6-phosphate isomerase of Anaeromyxobacter dehalogenans (strain 2CP-1 / ATCC BAA-258).